The following is a 549-amino-acid chain: MEIFFTILIMTLVVSLSGVVTRVMPFQIPLPLMQIAIGALLAWPTFGLHVEFDPELFLVLFIPPLLFADGWKTPTREFLEHGREIFGLALALVVVTVVGIGFLIYWVVPGIPLIPAFALAAVLSPTDAVALSGIVGEGRIPKKIMGILQGEALMNDASGLVSLKFAVAVAMGTMIFTVGGATVEFMKVAIGGILAGFVVSWLYGRSLRFLSRWGGDEPATQIVLLFLLPFASYLIAEHIGVSGILAAVAAGMTITRSGVMRRAPLAMRLRANSTWAMLEFVFNGMVFLLLGLQLPGILETSLMAAEIDPNVEIWMLFTNIILIYAALMLVRFGWLWTMKKFSNRFLKKKPMEFGSWTTREILIASFAGVRGAITLAGVLSIPLLLPDGNVFPARYELVFLAAGVILFSLFVGVVMLPILLQHIEVADHSQQLKEERIARAATAEVAIVAIQKMEERLAADTEENIDNQLLTEVSSRVIGNLRRRADGRNDVESSVQEENLERRFRLAALRSERAELYHLRATREISNETLQKLLHDLDLLEALLIEENQ.

Helical transmembrane passes span 1–21, 28–48, 50–70, 85–105, 106–126, 165–185, 187–207, 222–242, 278–298, 310–330, 361–381, and 398–418; these read MEIFFTILIMTLVVSLSGVVT, IPLPLMQIAIGALLAWPTFGL, VEFDPELFLVLFIPPLLFADG, IFGLALALVVVTVVGIGFLIY, WVVPGIPLIPAFALAAVLSPT, FAVAVAMGTMIFTVGGATVEF, KVAIGGILAGFVVSWLYGRSL, IVLLFLLPFASYLIAEHIGVS, LEFVFNGMVFLLLGLQLPGIL, NVEIWMLFTNIILIYAALMLV, ILIASFAGVRGAITLAGVLSI, and VFLAAGVILFSLFVGVVMLPI.

Belongs to the monovalent cation:proton antiporter 1 (CPA1) transporter (TC 2.A.36) family.

It is found in the cell inner membrane. This is an uncharacterized protein from Escherichia coli (strain K12).